Consider the following 252-residue polypeptide: Putative cytosolic acyl coenzyme A thioester hydrolase-like (252 aa).

HotDog ACOT-type domains follow at residues 1–90 (MIKE…LSLT) and 146–252 (SYSQ…SVFT).

As to quaternary structure, homodimer. In terms of tissue distribution, expressed in all tissues examined. Up-regulated in nasopharyngeal carcinoma (at protein level).

The protein resides in the cytoplasm. The enzyme catalyses hexadecanoyl-CoA + H2O = hexadecanoate + CoA + H(+). Its function is as follows. Acyl-CoA thioesterases are a group of enzymes that catalyze the hydrolysis of acyl-CoAs to the free fatty acid and coenzyme A (CoASH), providing the potential to regulate intracellular levels of acyl-CoAs, free fatty acids and CoASH. This Homo sapiens (Human) protein is Putative cytosolic acyl coenzyme A thioester hydrolase-like (ACOT7L).